A 320-amino-acid chain; its full sequence is NADH-ubiquinone oxidoreductase chain 1 (320 aa).

A run of 8 helical transmembrane segments spans residues 3–23 (LITI…VAFL), 72–92 (ILLI…WTPI), 103–123 (LGFL…LWAG), 147–167 (VTLG…TMQL), 174–194 (HIWL…STLA), 226–246 (FFLA…ILFI), 255–275 (ELFL…FLWI), and 295–315 (FLPL…SISG).

The protein belongs to the complex I subunit 1 family.

The protein resides in the mitochondrion inner membrane. It carries out the reaction a ubiquinone + NADH + 5 H(+)(in) = a ubiquinol + NAD(+) + 4 H(+)(out). Core subunit of the mitochondrial membrane respiratory chain NADH dehydrogenase (Complex I) that is believed to belong to the minimal assembly required for catalysis. Complex I functions in the transfer of electrons from NADH to the respiratory chain. The immediate electron acceptor for the enzyme is believed to be ubiquinone. The protein is NADH-ubiquinone oxidoreductase chain 1 (MT-ND1) of Varanus jobiensis (Peach throat monitor).